The chain runs to 212 residues: Tetraspanin-31-B (212 aa).

Over 1–12 (MVCGGFTCSKNA) the chain is Cytoplasmic. A helical membrane pass occupies residues 13–33 (LCALNVVYMLVGVLLIIVAAW). Topologically, residues 34-44 (GKGFGIVSSIH) are extracellular. Residues 45–65 (IIGGVIAIGVFLLLIAIIGLI) form a helical membrane-spanning segment. Topologically, residues 66–72 (GAVSHHQ) are cytoplasmic. A helical transmembrane segment spans residues 73–93 (VMLFIYMVVLILVFIFQFIVS). At 94-175 (CSCLAMNRSQ…MLNHADEALK (82 aa)) the chain is on the extracellular side. N100, N109, N117, and N134 each carry an N-linked (GlcNAc...) asparagine glycan. A helical transmembrane segment spans residues 176–196 (ILGGVGLFFSFTEILGVWLAF). Residues 197 to 212 (RYRNQKDPRANPSAFL) lie on the Cytoplasmic side of the membrane.

This sequence belongs to the tetraspanin (TM4SF) family.

Its subcellular location is the membrane. The polypeptide is Tetraspanin-31-B (tspan31-b) (Xenopus laevis (African clawed frog)).